A 136-amino-acid polypeptide reads, in one-letter code: Secreted RxLR effector protein 10 (136 aa).

The first 22 residues, 1-22, serve as a signal peptide directing secretion; sequence MRVLNFVLTTTVVLLTSSEGIA. The short motif at 42–56 is the RxLR-dEER element; that stretch reads RSLRATENPGSDESR. A disordered region spans residues 42 to 78; sequence RSLRATENPGSDESRLNEKDTGFDPDGSSSKEDEDIG. Residues 53–63 show a composition bias toward basic and acidic residues; the sequence is DESRLNEKDTG.

It belongs to the RxLR effector family.

It is found in the secreted. The protein localises to the host cytoplasm. Its subcellular location is the host nucleus. In terms of biological role, effector that acts as a broad suppressor of cell death to interrupt plant immunity. Inhibits cell death induced by cell death-inducing proteins, including the PAMP elicitor INF1 from P.infestans. This chain is Secreted RxLR effector protein 10, found in Plasmopara viticola (Downy mildew of grapevine).